The primary structure comprises 908 residues: NADH-quinone oxidoreductase subunit G (908 aa).

The 82-residue stretch at 2–83 (ATIHVDGKEY…GTFISIDDEE (82 aa)) folds into the 2Fe-2S ferredoxin-type domain. The [2Fe-2S] cluster site is built by Cys-34, Cys-45, Cys-48, and Cys-67. One can recognise a 4Fe-4S His(Cys)3-ligated-type domain in the interval 83–122 (EAKQFRESVVEWLMTNHPHDCPVCEEGGNCHLQDMTVMTG). Residues His-99, Cys-103, Cys-106, Cys-112, Cys-151, Cys-154, Cys-157, Cys-201, Cys-228, Cys-231, Cys-235, and Cys-263 each coordinate [4Fe-4S] cluster. The 4Fe-4S Mo/W bis-MGD-type domain maps to 221–277 (MQFAPSICQQCSIGCNISPGERYGELRRIENRYNGTVNHYFLCDRGRFGYGYVNLKD).

This sequence belongs to the complex I 75 kDa subunit family. Composed of 13 different subunits. Subunits NuoCD, E, F, and G constitute the peripheral sector of the complex. [2Fe-2S] cluster serves as cofactor. Requires [4Fe-4S] cluster as cofactor.

It carries out the reaction a quinone + NADH + 5 H(+)(in) = a quinol + NAD(+) + 4 H(+)(out). Its function is as follows. NDH-1 shuttles electrons from NADH, via FMN and iron-sulfur (Fe-S) centers, to quinones in the respiratory chain. The immediate electron acceptor for the enzyme in this species is believed to be ubiquinone. Couples the redox reaction to proton translocation (for every two electrons transferred, four hydrogen ions are translocated across the cytoplasmic membrane), and thus conserves the redox energy in a proton gradient. The sequence is that of NADH-quinone oxidoreductase subunit G (nuoG) from Shigella flexneri.